The following is an 89-amino-acid chain: Small ribosomal subunit protein uS15 (89 aa).

Belongs to the universal ribosomal protein uS15 family. In terms of assembly, part of the 30S ribosomal subunit. Forms a bridge to the 50S subunit in the 70S ribosome, contacting the 23S rRNA.

Its function is as follows. One of the primary rRNA binding proteins, it binds directly to 16S rRNA where it helps nucleate assembly of the platform of the 30S subunit by binding and bridging several RNA helices of the 16S rRNA. Forms an intersubunit bridge (bridge B4) with the 23S rRNA of the 50S subunit in the ribosome. The chain is Small ribosomal subunit protein uS15 from Halalkalibacterium halodurans (strain ATCC BAA-125 / DSM 18197 / FERM 7344 / JCM 9153 / C-125) (Bacillus halodurans).